The chain runs to 408 residues: Multidrug resistance protein MdtG (408 aa).

11 helical membrane passes run 16 to 36, 58 to 78, 92 to 112, 115 to 135, 146 to 166, 173 to 193, 224 to 244, 256 to 276, 290 to 310, 319 to 339, and 378 to 398; these read LIVAWLGCFLTGAAFSLVMPF, IVFSITFLFSAIASPFWGGLA, LGMGIVMVLMGLAQNIWQFLI, ALLGLLGGFVPNANALIATQV, TLSTGGVSGALLGPMAGGLLA, PVFFITASVLILCFFVTLFCI, LFVTTLIIQVATGSIAPILTL, VAFISGMIASVPGVAALLSAP, ILITALIFSVLLLIPMSYVQT, FLLGAADGALLPAVQTLLVYN, and AVFLVTAGVVLFNAVYSWNSL.

This sequence belongs to the major facilitator superfamily. DHA1 family. MdtG (TC 2.A.1.2.20) subfamily.

Its subcellular location is the cell inner membrane. Confers resistance to fosfomycin and deoxycholate. In Escherichia coli O6:K15:H31 (strain 536 / UPEC), this protein is Multidrug resistance protein MdtG.